The primary structure comprises 312 residues: Olfactory receptor 1D5 (312 aa).

Residues 1–25 lie on the Extracellular side of the membrane; that stretch reads MDGDNQSENSQFLLLGISESPEQQQ. A glycan (N-linked (GlcNAc...) asparagine) is linked at asparagine 5. Residues 26-49 traverse the membrane as a helical segment; the sequence is ILFWMFLSMYLVTVLGNVLIILAI. Residues 50–57 are Cytoplasmic-facing; sequence SSDSHLHT. Residues 58-79 traverse the membrane as a helical segment; that stretch reads PMYFFLANLSFTDLFFVTNTIP. Residues 80-100 are Extracellular-facing; the sequence is KMLVNFQSQNKAISYAGCLTQ. Cysteine 97 and cysteine 189 form a disulfide bridge. A helical membrane pass occupies residues 101–120; sequence LYFLVSLVTLDNLILAVMAY. At 121–140 the chain is on the cytoplasmic side; the sequence is DRYVAICCPLHYVTAMSPGL. Residues 141–158 form a helical membrane-spanning segment; it reads CVLLLSLCWGLSVLYGLL. The Extracellular segment spans residues 159–196; that stretch reads LTLLLTRVTFCGPREIHYLFCDMYILLRLACSNTHIIH. Residues 197–220 form a helical membrane-spanning segment; the sequence is TVLVATGCFIFLTPLGFMTTSYVC. The Cytoplasmic segment spans residues 221–237; it reads IVRTILQIPSASKKYKA. Residues 238 to 260 traverse the membrane as a helical segment; the sequence is FSTCASHLGVVSLFYGTLAMVYL. Topologically, residues 261–271 are extracellular; sequence QPLHTYSMKDS. A helical membrane pass occupies residues 272 to 291; sequence VATVMYAVVTPMMNPFIYSL. Residues 292–312 lie on the Cytoplasmic side of the membrane; that stretch reads RNKDMHGALGRVLRRLFQRPK.

It belongs to the G-protein coupled receptor 1 family.

The protein localises to the cell membrane. Functionally, odorant receptor. This Pan paniscus (Pygmy chimpanzee) protein is Olfactory receptor 1D5 (OR1D5).